The chain runs to 314 residues: tRNA uridine(34) hydroxylase (314 aa).

Positions 140–234 constitute a Rhodanese domain; that stretch reads ARDDVILIDT…YLEETPPDES (95 aa). The active-site Cysteine persulfide intermediate is cysteine 194.

Belongs to the TrhO family.

It carries out the reaction uridine(34) in tRNA + AH2 + O2 = 5-hydroxyuridine(34) in tRNA + A + H2O. Catalyzes oxygen-dependent 5-hydroxyuridine (ho5U) modification at position 34 in tRNAs. In Acinetobacter baumannii (strain SDF), this protein is tRNA uridine(34) hydroxylase.